The primary structure comprises 387 residues: Yellow-related salivary protein ASP2 (387 aa).

A signal peptide spans 1-18 (MKIFLCLIVVVSLQGVLA).

It belongs to the major royal jelly protein family. Female salivary gland (at protein level).

It localises to the secreted. Its function is as follows. Probably modulates blood feeding of sand flies on vertebrate species by binding and sequestering different mediators involved in the host response. Binds biogenic amines. Binds octopamine with high affinity. Binds serotonin and dopamine with medium affinity. Poorly binds histamine. Does not bind noradrenaline and adrenaline. The sequence is that of Yellow-related salivary protein ASP2 from Phlebotomus orientalis (Phlebotomine sand fly).